Reading from the N-terminus, the 509-residue chain is DNA primase large subunit (509 aa).

The interdomain linker stretch occupies residues 253 to 270; sequence LSHSYTGQDYSTQGNVGK. An interacts with PRIM1 region spans residues 266-509; sequence GNVGKISLDQ…GLEDYFSEDS (244 aa). [4Fe-4S] cluster contacts are provided by Cys287, Cys367, Cys384, and Cys424. An RNA:DNA duplex-binding region spans residues 300 to 442; that stretch reads HLRHGGRMQY…NVDDCGFSLN (143 aa). Residues 461–486 are disordered; it reads IKKEPIQPETPQPKPSVQKTKDASSA. Residue Thr470 is modified to Phosphothreonine.

The protein belongs to the eukaryotic-type primase large subunit family. Heterodimer of a catalytic subunit PRIM1 and a regulatory subunit PRIM2, also known as the DNA primase complex. Interacts via (C-terminus) with PRIM1. Component of the alpha DNA polymerase complex (also known as the alpha DNA polymerase-primase complex) consisting of four subunits: the catalytic subunit POLA1, the regulatory subunit POLA2, and the primase complex subunits PRIM1 and PRIM2 respectively. Within the complex, POLA1 directly interacts with PRIM2. It depends on [4Fe-4S] cluster as a cofactor.

Functionally, regulatory subunit of the DNA primase complex and component of the DNA polymerase alpha complex (also known as the alpha DNA polymerase-primase complex) which play an essential role in the initiation of DNA synthesis. During the S phase of the cell cycle, the DNA polymerase alpha complex (composed of a catalytic subunit POLA1, an accessory subunit POLA2 and two primase subunits, the catalytic subunit PRIM1 and the regulatory subunit PRIM2) is recruited to DNA at the replicative forks via direct interactions with MCM10 and WDHD1. The primase subunit of the polymerase alpha complex initiates DNA synthesis by oligomerising short RNA primers on both leading and lagging strands. These primers are initially extended by the polymerase alpha catalytic subunit and subsequently transferred to polymerase delta and polymerase epsilon for processive synthesis on the lagging and leading strand, respectively. In the primase complex, both subunits are necessary for the initial di-nucleotide formation, but the extension of the primer depends only on the catalytic subunit. Binds RNA:DNA duplex and coordinates the catalytic activities of PRIM1 and POLA2 during primase-to-polymerase switch. The polypeptide is DNA primase large subunit (PRIM2) (Homo sapiens (Human)).